Consider the following 149-residue polypeptide: Arginine repressor (149 aa).

Belongs to the ArgR family.

It localises to the cytoplasm. It functions in the pathway amino-acid biosynthesis; L-arginine biosynthesis [regulation]. Functionally, regulates arginine biosynthesis genes. The polypeptide is Arginine repressor (Alkaliphilus metalliredigens (strain QYMF)).